Here is a 187-residue protein sequence, read N- to C-terminus: High affinity copper uptake protein 1 (187 aa).

Residues M1–E65 lie on the Extracellular side of the membrane. Positions H9 to H10 match the Bis-His motif motif. N19 carries N-linked (GlcNAc...) asparagine glycosylation. A glycan (O-linked (GalNAc...) threonine) is linked at T30. The chain crosses the membrane as a helical span at residues M66–A86. Residues R87 to H129 lie on the Cytoplasmic side of the membrane. T111 is modified (phosphothreonine). A helical transmembrane segment spans residues L130 to F150. Over M151–Y153 the chain is Extracellular. Residues N154–W174 traverse the membrane as a helical segment. Residues K175–H187 are Cytoplasmic-facing. Cysteine sulfenic acid (-SOH) is present on C186.

It belongs to the copper transporter (Ctr) (TC 1.A.56) family. SLC31A subfamily. In terms of assembly, homotrimer; is stabilized by cisplatin via interactions between cisplatin and the methionine-rich clusters, and could be crucial for the copper(2+) reduction process and copper(1+) stabilization. Heterotrimer between SLC31A1, CCS and SOD1; this heterotrimer is copper(1+)-mediated and its maintenance is regulated through SOD1 activation. Interacts with KDR; this interaction is induced upon VEGFA stimulation leading to SLC31A1 and KDR subsequent co-internalization to early endosomes, thereby activating KDR downstream signaling in endothelial cells. Interacts (via C-terminal domain) with ATOX1 (via dimer form); this interaction improves ATOX1 stability and controls intracellular copper(1+) levels. Interacts with SLC31A2; this interaction stabilizes SLC31A2 and protects its from ubiquitination and degradation. Interacts (via C-terminal domain) with CCS; this interaction is copper(1+)-mediated. In terms of processing, O-Glycosylation at Thr-30 protects from proteolytic cleavage in the N-terminal extracellular domain. Post-translationally, proteolytic cleavage, leading to a truncated form, is facilitated by SLC31A2 and initiated preferentially by CTSL and to a minor extend by CTSB in endolysosomal compartments. A post-CTSL/cathepsin L processing occurs to yield to the fully truncated form. Sulfenylated at Cys-186 after stimulation with VEGFA, which induces SLC31A1-KDR disulfide bond formation and their co-internalization to early endosomes, driving to a sustained VEGFR2 signaling.

The protein localises to the cell membrane. It is found in the early endosome membrane. The protein resides in the recycling endosome membrane. Its subcellular location is the apical cell membrane. It localises to the late endosome membrane. The protein localises to the basolateral cell membrane. The catalysed reaction is Cu(+)(out) = Cu(+)(in). The enzyme catalyses Ag(+)(out) = Ag(+)(in). With respect to regulation, copper uptake is inhibited by cold temperature, silver and zinc ions. Platinum-containing chemotherapeutic agents uptake is inhibited by cold temperature and copper. In terms of biological role, uniporter that mediates the transport of copper(1+) from the extracellular space to the cytoplasm, across the plasma membrane. Then, delivers directly copper(1+) to specific chaperone such as ATOX1, via a copper(1+)- mediated transient interaction between the C-terminal domain and a copper(1+) chaperone, thus controlling intracellular copper(1+) levels. May function in copper(1+) import from the apical membrane thus may drive intestinal copper absorption. The copper(1+) transport mechanism is sodium-independent, saturable and of high-affinity. Also mediates the uptake of silver(1+). May function in the influx of the platinum-containing chemotherapeutic agents. The platinum-containing chemotherapeutic agents uptake is saturable. Also participates in the first step of copper(2+) acquisition by cells through a direct transfer of copper(2+) from copper(2+) carriers in blood, such as ALB to the N-terminal domain of SLC31A1, leading to copper(2+) reduction and probably followed by copper(1+) stabilization. In addition, functions as a redox sensor to promote angiogenesis in endothelial cells, in a copper(1+) transport independent manner, by transmitting the VEGF-induced ROS signal through a sulfenylation at Cys-189 leading to a subsequent disulfide bond formation between SLC31A1 and KDR. The SLC31A1-KDR complex is then co-internalized to early endosomes, driving a sustained VEGFR2 signaling. Its function is as follows. Mobilizes copper(1+) out of the endosomal compartment, making copper(1+) available for export out of the cells. This chain is High affinity copper uptake protein 1, found in Rattus norvegicus (Rat).